A 774-amino-acid chain; its full sequence is Probable ubiquitin-like-specific protease 2A (774 aa).

The segment at 118 to 141 is disordered; it reads SSLSENDEVSTGEATNPASDPHEV. Residues histidine 400, aspartate 430, and cysteine 485 contribute to the active site. The interval 548–568 is disordered; that stretch reads ILPANSKSEPPHCGVSNRNDQ.

The protein belongs to the peptidase C48 family.

In terms of biological role, protease that catalyzes two essential functions in the SUMO pathway: processing of full-length SUMOs to their mature forms and deconjugation of SUMO from targeted proteins. The protein is Probable ubiquitin-like-specific protease 2A (ULP2A) of Arabidopsis thaliana (Mouse-ear cress).